The following is a 73-amino-acid chain: Lactogenin (73 aa).

Q1 is subject to Pyrrolidone carboxylic acid.

Belongs to the pancreatic ribonuclease family. In terms of tissue distribution, milk.

The protein resides in the secreted. Its function is as follows. Secretory RNase specific towards pyrimidine bases, with higher activity towards poly C than poly U. Inhibits cell-free translation. The chain is Lactogenin from Bos taurus (Bovine).